A 607-amino-acid chain; its full sequence is Polyphenol oxidase, chloroplastic (607 aa).

A chloroplast-targeting transit peptide spans 1–103 (MASLPWSLTT…LGATKPLAFG (103 aa)). The segment at 39–73 (RNRSRRFAPSKVSCNSANGDPNSDSTSDVRETSSG) is disordered. A compositionally biased stretch (polar residues) spans 50–64 (VSCNSANGDPNSDST). Disulfide bonds link C114–C129 and C128–C191. Cu cation-binding residues include H190, H211, H220, H342, H346, and H375. A cross-link (2'-(S-cysteinyl)-histidine (Cys-His)) is located at residues 194-211 (CQGAYDQVGYTDLELQVH).

The protein belongs to the tyrosinase family. Requires Cu(2+) as cofactor.

It localises to the plastid. The protein resides in the chloroplast thylakoid lumen. The catalysed reaction is 2 catechol + O2 = 2 1,2-benzoquinone + 2 H2O. Its function is as follows. Catalyzes the oxidation of mono- and o-diphenols to o-diquinones. The chain is Polyphenol oxidase, chloroplastic from Vitis vinifera (Grape).